We begin with the raw amino-acid sequence, 337 residues long: Palmitoyltransferase ZDHHC15 (337 aa).

The Cytoplasmic segment spans residues 1–20 (MRRGWKMALSGGLRCCRRVL). The chain crosses the membrane as a helical span at residues 21 to 41 (SWVPVLVIVLVVLWSYYAYVF). Over 42 to 56 (ELCLVTVLSPAEKVI) the chain is Lumenal. Residues 57–77 (YLILYHAIFVFFTWTYWKSIF) traverse the membrane as a helical segment. Residues 78 to 172 (TLPQQPNQKF…NNCIGFSNYK (95 aa)) lie on the Cytoplasmic side of the membrane. Residues 129 to 179 (RFCDRCHLIKPDRCHHCSVCAMCVLKMDHHCPWVNNCIGFSNYKFFLQFLA) enclose the DHHC domain. Residues cysteine 131, cysteine 134, histidine 144, cysteine 145, cysteine 148, cysteine 151, and histidine 158 each coordinate Zn(2+). Cysteine 159 acts as the S-palmitoyl cysteine intermediate in catalysis. Residue cysteine 165 coordinates Zn(2+). Residues 173–193 (FFLQFLAYSVLYCLYIATTVF) form a helical membrane-spanning segment. The Lumenal segment spans residues 194–210 (SYFIKYWRGELPSVRSK). A helical transmembrane segment spans residues 211-234 (FHVLFLLFVACMFFVSLVILFGYH). At 235 to 337 (CWLVSRNKTT…SSSLAVETET (103 aa)) the chain is on the cytoplasmic side. Residues 306–337 (PLLANEETWEDNEDDNQDYPEGSSSLAVETET) are disordered. The segment covering 312–323 (ETWEDNEDDNQD) has biased composition (acidic residues). The segment covering 327–337 (GSSSLAVETET) has biased composition (polar residues).

Belongs to the DHHC palmitoyltransferase family. In terms of processing, autopalmitoylated (in vitro). As to expression, expressed in placenta, liver, lung, kidney, heart and brain.

The protein localises to the golgi apparatus membrane. It localises to the postsynaptic density. It carries out the reaction L-cysteinyl-[protein] + hexadecanoyl-CoA = S-hexadecanoyl-L-cysteinyl-[protein] + CoA. The enzyme catalyses L-cysteinyl-[protein] + tetradecanoyl-CoA = S-tetradecanoyl-L-cysteinyl-[protein] + CoA. It catalyses the reaction L-cysteinyl-[protein] + octadecanoyl-CoA = S-octadecanoyl-L-cysteinyl-[protein] + CoA. In terms of biological role, palmitoyltransferase that catalyzes the addition of palmitate onto various protein substrates. Has no stringent fatty acid selectivity and in addition to palmitate can also transfer onto target proteins myristate from tetradecanoyl-CoA and stearate from octadecanoyl-CoA. Palmitoylates IGF2R and SORT1, promoting their partitioning to an endosomal membrane subdomain where they can interact with the retromer cargo-selective complex. Thereby, regulates retrograde transport from endosomes to the Golgi apparatus of these lysosomal sorting receptors and plays a role in trafficking of lysosomal proteins. In the nervous system, catalyzes the palmitoylation of DLG4/PSD95 and regulates its synaptic clustering and function in synaptogenesis. Could be involved in the differentiation of dopaminergic neurons and the development of the diencephalon. Could also catalyze the palmitoylation of GAP43. Could also palmitoylate DNAJC5 and regulate its localization to the Golgi membrane. Could also palmitoylate FYN as shown in vitro. May palmitoylate CALHM3 subunit of gustatory voltage-gated ion channels and modulate channel gating and kinetics. The chain is Palmitoyltransferase ZDHHC15 from Homo sapiens (Human).